The sequence spans 395 residues: Isoafricanol synthase (395 aa).

The Mg(2+) site is built by Asp-95, Asn-246, Ser-250, and Glu-254. Residues 346 to 357 show a composition bias toward basic and acidic residues; that stretch reads TEAVSGGRERPW. Residues 346–395 form a disordered region; it reads TEAVSGGRERPWARLTGAEDLIRAGRGAPPPPGSGPDTRQPMPSEPSQLA.

Belongs to the terpene synthase family. Mg(2+) serves as cofactor.

The enzyme catalyses (2E,6E)-farnesyl diphosphate + H2O = (+)-isoafricanol + diphosphate. In terms of biological role, catalyzes the cyclization of farnesyl diphosphate (FPP) to isoafricanol. The chain is Isoafricanol synthase from Streptomyces malaysiensis.